We begin with the raw amino-acid sequence, 382 residues long: 26S proteasome non-ATPase regulatory subunit 6 (382 aa).

One can recognise a PCI domain in the interval 186–354 (QFKEASDLYL…GVIETTRSDA (169 aa)).

Belongs to the proteasome subunit S10 family.

In terms of biological role, acts as a regulatory subunit of the 26S proteasome which is involved in the ATP-dependent degradation of ubiquitinated proteins. The sequence is that of 26S proteasome non-ATPase regulatory subunit 6 (psmD6) from Dictyostelium discoideum (Social amoeba).